A 374-amino-acid polypeptide reads, in one-letter code: DNA integrity scanning protein DisA (374 aa).

The DAC domain occupies 20–158 (EALMRASLSA…DGERRVLEES (139 aa)). ATP is bound by residues Gly87, Leu105, and 118–122 (TRHRT).

Belongs to the DisA family. In terms of assembly, homooctamer. The cofactor is Mg(2+).

The catalysed reaction is 2 ATP = 3',3'-c-di-AMP + 2 diphosphate. Participates in a DNA-damage check-point that is active prior to asymmetric division when DNA is damaged. DisA forms globular foci that rapidly scan along the chromosomes during sporulation, searching for lesions. When a lesion is present, DisA pauses at the lesion site. This triggers a cellular response that culminates in a temporary block in sporulation initiation. In terms of biological role, also has diadenylate cyclase activity, catalyzing the condensation of 2 ATP molecules into cyclic di-AMP (c-di-AMP). c-di-AMP acts as a signaling molecule that couples DNA integrity with progression of sporulation. The rise in c-di-AMP level generated by DisA while scanning the chromosome, operates as a positive signal that advances sporulation; upon encountering a lesion, the DisA focus arrests at the damaged site and halts c-di-AMP synthesis. The protein is DNA integrity scanning protein DisA of Streptomyces griseus subsp. griseus (strain JCM 4626 / CBS 651.72 / NBRC 13350 / KCC S-0626 / ISP 5235).